The primary structure comprises 306 residues: Acetaldehyde dehydrogenase 3 (306 aa).

The active-site Acyl-thioester intermediate is the C131. NAD(+) contacts are provided by residues 162–170 and N273; that span reads SVGPGTRKN.

It belongs to the acetaldehyde dehydrogenase family.

It carries out the reaction acetaldehyde + NAD(+) + CoA = acetyl-CoA + NADH + H(+). This is Acetaldehyde dehydrogenase 3 from Burkholderia lata (strain ATCC 17760 / DSM 23089 / LMG 22485 / NCIMB 9086 / R18194 / 383).